The following is a 265-amino-acid chain: Apolipoprotein A-I (265 aa).

Residues 1-18 (MKALVLTLAVLFFTGSQA) form the signal peptide. A run of 2 repeats spans residues 67-88 (LKLLDNWDSLTSTFAKVREQLG) and 89-110 (PVTQEFWDNLEKETESLRQEMN). The tract at residues 67–265 (LKLLDNWDSL…DEASKKLNAQ (199 aa)) is 10 X approximate tandem repeats. M109 carries the post-translational modification Methionine sulfoxide. A 3; half-length repeat occupies 111 to 121 (KDLEEVKQKVQ). A run of 5 repeats spans residues 122-142 (PYLDEFKRKWQEELQIYRQKV), 144-165 (PLGEELREGARQKVQELQDKLT), 166-187 (PLAEEMRDRARAHVETLRQQLA), 188-209 (PYSDDLRQRMATRFEVLKEGGG), and 210-230 (SLAEYHAKASEQLKALGEKAK). The 9; half-length repeat unit spans residues 231–241 (PALEDLRQGLL). Repeat 10 spans residues 242 to 265 (PVLESLKVSILAAIDEASKKLNAQ).

Belongs to the apolipoprotein A1/A4/E family. In terms of assembly, homodimer. Interacts with APOA1BP and CLU. Component of a sperm activating protein complex (SPAP), consisting of APOA1, an immunoglobulin heavy chain, an immunoglobulin light chain and albumin. Interacts with NDRG1. Interacts with SCGB3A2. Interacts with NAXE and YJEFN3. Post-translationally, glycosylated. In terms of processing, palmitoylated. Phosphorylation sites are present in the extracellular medium. As to expression, major protein of plasma HDL, also found in chylomicrons.

The protein resides in the secreted. Participates in the reverse transport of cholesterol from tissues to the liver for excretion by promoting cholesterol efflux from tissues and by acting as a cofactor for the lecithin cholesterol acyltransferase (LCAT). As part of the SPAP complex, activates spermatozoa motility. The polypeptide is Apolipoprotein A-I (APOA1) (Physeter macrocephalus (Sperm whale)).